The primary structure comprises 362 residues: Histidine protein methyltransferase 1 homolog (362 aa).

Residues 18–88 (TSLDDGTCVL…EACKHQPSWK (71 aa)) form a disordered region. The segment covering 30-51 (QKGKQDKRQSTERPGLPRDHSW) has biased composition (basic and acidic residues). The span at 52–65 (KCSSLGNAASSEDT) shows a compositional bias: polar residues. A phosphoserine mark is found at Ser-62 and Ser-67. The segment covering 73–82 (DRSDDPEACK) has biased composition (basic and acidic residues). Tele-methylhistidine is present on His-144. S-adenosyl-L-methionine contacts are provided by residues 158–162 (IWECT), Gly-185, and 206–208 (QDY). The Nuclear localization signal motif lies at 237–243 (PDGKRQR). S-adenosyl-L-methionine-binding positions include 259–261 (GEW) and Ser-283.

This sequence belongs to the methyltransferase superfamily. METTL18 family. In terms of assembly, interacts with GRWD1 and members of the heat shock protein 90 and 70 families; these proteins may possibly be methylation substrates for the enzyme. Monomethylated at His-144 through automethylation. Automethylation at His-144 positively regulates the methyltransferase activity toward RPL3. Probably methylated on other residues.

The protein resides in the cytoplasm. It is found in the cytosol. Its subcellular location is the nucleus. The protein localises to the nucleolus. The enzyme catalyses L-histidyl-[protein] + S-adenosyl-L-methionine = N(tele)-methyl-L-histidyl-[protein] + S-adenosyl-L-homocysteine + H(+). Protein-L-histidine N-tele-methyltransferase that specifically monomethylates RPL3, thereby regulating translation elongation. Histidine methylation of RPL3 regulates translation elongation by slowing ribosome traversal on tyrosine codons: slower elongation provides enough time for proper folding of synthesized proteins and prevents cellular aggregation of tyrosine-rich proteins. The sequence is that of Histidine protein methyltransferase 1 homolog from Mus musculus (Mouse).